A 250-amino-acid polypeptide reads, in one-letter code: tRNA (guanine-N(1)-)-methyltransferase (250 aa).

S-adenosyl-L-methionine contacts are provided by residues glycine 113 and 134–139 (IGDYVL).

Belongs to the RNA methyltransferase TrmD family. In terms of assembly, homodimer.

The protein localises to the cytoplasm. The enzyme catalyses guanosine(37) in tRNA + S-adenosyl-L-methionine = N(1)-methylguanosine(37) in tRNA + S-adenosyl-L-homocysteine + H(+). Functionally, specifically methylates guanosine-37 in various tRNAs. The polypeptide is tRNA (guanine-N(1)-)-methyltransferase (Buchnera aphidicola subsp. Baizongia pistaciae (strain Bp)).